Reading from the N-terminus, the 256-residue chain is MLLAIDVGNTNTVLGVFEGRRLLDHWRVETSTRRTSDEYGILVRQLFTHRGIDPMKVTAVVVSSVVPPLQSNLEKMSERYFRVRPMFIGPGVKTGMPILYDNPREVGADRIVNAVSAYERHHAGVLVVDFGTATTFDAVSPKGEYLGGCICPGINISMEALFQNASKLPRVEFARPPHVIGRNTVHSMQAGLVYGYVGMVDGICARMQAELGFPVKVVATGGLASLVASESKAIHQVDEFLTLEGLRIIYGRNHAS.

Position 6 to 13 (6 to 13) interacts with ATP; sequence DVGNTNTV. Residues Y100 and 107-110 each bind substrate; that span reads GADR. Residue D109 is the Proton acceptor of the active site. D129 contributes to the K(+) binding site. Residue T132 coordinates ATP. T184 serves as a coordination point for substrate.

It belongs to the type III pantothenate kinase family. In terms of assembly, homodimer. Requires NH4(+) as cofactor. It depends on K(+) as a cofactor.

The protein resides in the cytoplasm. It catalyses the reaction (R)-pantothenate + ATP = (R)-4'-phosphopantothenate + ADP + H(+). It participates in cofactor biosynthesis; coenzyme A biosynthesis; CoA from (R)-pantothenate: step 1/5. Its function is as follows. Catalyzes the phosphorylation of pantothenate (Pan), the first step in CoA biosynthesis. This Myxococcus xanthus (strain DK1622) protein is Type III pantothenate kinase.